The following is a 162-amino-acid chain: D-aminoacyl-tRNA deacylase (162 aa).

A Gly-cisPro motif, important for rejection of L-amino acids motif is present at residues 145 to 146 (GP).

This sequence belongs to the DTD family. As to quaternary structure, homodimer.

The protein resides in the cytoplasm. The enzyme catalyses glycyl-tRNA(Ala) + H2O = tRNA(Ala) + glycine + H(+). It catalyses the reaction a D-aminoacyl-tRNA + H2O = a tRNA + a D-alpha-amino acid + H(+). Functionally, an aminoacyl-tRNA editing enzyme that deacylates mischarged D-aminoacyl-tRNAs. Also deacylates mischarged glycyl-tRNA(Ala), protecting cells against glycine mischarging by AlaRS. Acts via tRNA-based rather than protein-based catalysis; rejects L-amino acids rather than detecting D-amino acids in the active site. By recycling D-aminoacyl-tRNA to D-amino acids and free tRNA molecules, this enzyme counteracts the toxicity associated with the formation of D-aminoacyl-tRNA entities in vivo and helps enforce protein L-homochirality. The polypeptide is D-aminoacyl-tRNA deacylase (Bifidobacterium longum subsp. infantis (strain ATCC 15697 / DSM 20088 / JCM 1222 / NCTC 11817 / S12)).